We begin with the raw amino-acid sequence, 542 residues long: Chaperonin GroEL (542 aa).

Residues 29–32 (TLGP), K50, 86–90 (DGTTT), G414, and D494 contribute to the ATP site.

It belongs to the chaperonin (HSP60) family. In terms of assembly, forms a cylinder of 14 subunits composed of two heptameric rings stacked back-to-back. Interacts with the co-chaperonin GroES.

The protein localises to the cytoplasm. It catalyses the reaction ATP + H2O + a folded polypeptide = ADP + phosphate + an unfolded polypeptide.. In terms of biological role, together with its co-chaperonin GroES, plays an essential role in assisting protein folding. The GroEL-GroES system forms a nano-cage that allows encapsulation of the non-native substrate proteins and provides a physical environment optimized to promote and accelerate protein folding. The sequence is that of Chaperonin GroEL from Cytophaga hutchinsonii (strain ATCC 33406 / DSM 1761 / CIP 103989 / NBRC 15051 / NCIMB 9469 / D465).